The following is a 371-amino-acid chain: Glycosyltransferase 8 domain-containing protein 1 (371 aa).

The Cytoplasmic portion of the chain corresponds to 1-7 (MSFRKVN). Residues 8–28 (IIILVLAVALFLLVLHHNFLS) form a helical; Signal-anchor for type II membrane protein membrane-spanning segment. Topologically, residues 29-371 (LSSLLRNEVT…RRYTEISNIK (343 aa)) are lumenal. Residues N249 and N257 are each glycosylated (N-linked (GlcNAc...) asparagine).

Belongs to the glycosyltransferase 8 family.

The protein localises to the membrane. The polypeptide is Glycosyltransferase 8 domain-containing protein 1 (GLT8D1) (Homo sapiens (Human)).